A 386-amino-acid polypeptide reads, in one-letter code: Succinate--CoA ligase [ADP-forming] subunit beta (386 aa).

The ATP-grasp domain maps to 9–244; sequence KEILRKYGVP…HDEEDPLETR (236 aa). ATP-binding positions include K46, 53 to 55, E99, C102, and E107; that span reads GRG. The Mg(2+) site is built by N199 and D213. Substrate is bound by residues N264 and 321-323; that span reads GIM.

The protein belongs to the succinate/malate CoA ligase beta subunit family. In terms of assembly, heterotetramer of two alpha and two beta subunits. The cofactor is Mg(2+).

The catalysed reaction is succinate + ATP + CoA = succinyl-CoA + ADP + phosphate. The enzyme catalyses GTP + succinate + CoA = succinyl-CoA + GDP + phosphate. Its pathway is carbohydrate metabolism; tricarboxylic acid cycle; succinate from succinyl-CoA (ligase route): step 1/1. Succinyl-CoA synthetase functions in the citric acid cycle (TCA), coupling the hydrolysis of succinyl-CoA to the synthesis of either ATP or GTP and thus represents the only step of substrate-level phosphorylation in the TCA. The beta subunit provides nucleotide specificity of the enzyme and binds the substrate succinate, while the binding sites for coenzyme A and phosphate are found in the alpha subunit. This chain is Succinate--CoA ligase [ADP-forming] subunit beta, found in Rickettsia rickettsii (strain Iowa).